Reading from the N-terminus, the 71-residue chain is MIVPVRCFTCGKVIGNKWDTYLELLQADYAEGDALDALGLVRYCCRRMLMTHVDLIEKLLNYNTMEKSDPN.

Zn(2+) contacts are provided by Cys7, Cys10, Cys44, and Cys45.

It belongs to the archaeal Rpo10/eukaryotic RPB10 RNA polymerase subunit family. In terms of assembly, interacts with IYO.

The protein resides in the nucleus. In Arabidopsis thaliana (Mouse-ear cress), this protein is DNA-directed RNA polymerase subunit 10-like protein.